A 200-amino-acid polypeptide reads, in one-letter code: Large ribosomal subunit protein uL4 (200 aa).

The segment at Gly38–Thr72 is disordered.

Belongs to the universal ribosomal protein uL4 family. Part of the 50S ribosomal subunit.

Its function is as follows. One of the primary rRNA binding proteins, this protein initially binds near the 5'-end of the 23S rRNA. It is important during the early stages of 50S assembly. It makes multiple contacts with different domains of the 23S rRNA in the assembled 50S subunit and ribosome. In terms of biological role, forms part of the polypeptide exit tunnel. This is Large ribosomal subunit protein uL4 from Pseudomonas putida (strain ATCC 700007 / DSM 6899 / JCM 31910 / BCRC 17059 / LMG 24140 / F1).